The primary structure comprises 640 residues: Choline O-acetyltransferase (640 aa).

Residue S17 is modified to Phosphoserine. The Proton acceptor role is filled by H334. Residue S365 is modified to Phosphoserine. Residues 412-424 (GKTF…YSPD), S450, and Q551 contribute to the CoA site. Residues 614 to 640 (CSSRQPADSKPPAPKEKARGPSQAKQS) are disordered.

The protein belongs to the carnitine/choline acetyltransferase family. In terms of assembly, monomer.

It catalyses the reaction choline + acetyl-CoA = acetylcholine + CoA. In terms of biological role, catalyzes the reversible synthesis of acetylcholine (ACh) from acetyl CoA and choline at cholinergic synapses. The sequence is that of Choline O-acetyltransferase (Chat) from Rattus norvegicus (Rat).